The sequence spans 151 residues: MILVSSCLGGIECRYNGSHAASEKIRKLVDEKKAVMACPELLGGFSTPREPAEIIGGTGEDVLNGTAKIVTASGEDVTELYMEGAAKTLAYAKEINASAVILKENSPSCGSGFIYNGTFSGKKITGSGVTAALLKQAGYRVISENELNDIL.

This is an uncharacterized protein from Bacillus subtilis (strain 168).